Consider the following 505-residue polypeptide: Trans-cinnamate 4-monooxygenase (505 aa).

The chain crosses the membrane as a helical span at residues 3-23; that stretch reads LLLLEKTLLGLFIAAITAIAI. (E)-cinnamate-binding positions include 213-218 and alanine 306; that span reads RSRLAQ. Heme is bound at residue cysteine 447.

The protein belongs to the cytochrome P450 family. Heme serves as cofactor.

Its subcellular location is the membrane. The enzyme catalyses (E)-cinnamate + reduced [NADPH--hemoprotein reductase] + O2 = (E)-4-coumarate + oxidized [NADPH--hemoprotein reductase] + H2O + H(+). It participates in phenylpropanoid metabolism; trans-4-coumarate biosynthesis; trans-4-coumarate from trans-cinnamate: step 1/1. Its function is as follows. Catalyzes the first oxidative step of the phenylpropanoid pathway in higher plants by transforming trans-cinnamate into p-coumarate. The compounds formed by this pathway are essential components for lignification, pollination, and defense against ultraviolet light, predators and pathogens. The sequence is that of Trans-cinnamate 4-monooxygenase (CYP73A14) from Glycyrrhiza echinata (Licorice).